The sequence spans 307 residues: MAESTAGSEAEQDGMTPVRPVEAELLVVTGMSGAGRSTAADALEDHGWYVVENLPPQMLGTLAELVSHAPQSIPKLAVVVDVRSTALFADIRAALKTLEASGVTFRVLFLDANDDVLVRRFEQGRRPHPLQEGGRILDGIASERDLLHELRDSADIVLDTSEFNVHALATAITELFSETGPVALRLNVMSFGFKYGLPVDANFVVDARFIPNPHWVPQLRPHTGLDKDVSDYVLEAEGVKSFVDRYVLAIEPVLDGYRRENKHYATIAVGCTGGKHRSVAVAMELSKKLAQYPRVTVTTTHRDLGRE.

Position 30-37 (30-37 (GMSGAGRS)) interacts with ATP. A GTP-binding site is contributed by 81–84 (DVRS).

The protein belongs to the RapZ-like family.

Displays ATPase and GTPase activities. The sequence is that of Nucleotide-binding protein Arth_2083 from Arthrobacter sp. (strain FB24).